We begin with the raw amino-acid sequence, 110 residues long: Toxin HigB-2 (110 aa).

Functionally, toxic component of a type II toxin-antitoxin (TA) system. Inhibits translation by cleavage of mRNA. In Vibrio cholerae serotype O1 (strain ATCC 39315 / El Tor Inaba N16961), this protein is Toxin HigB-2 (higB-2).